Consider the following 112-residue polypeptide: Transmembrane protein 14 homolog (112 aa).

A run of 4 helical transmembrane segments spans residues 9-26 (FKLN…GVIG), 36-53 (LIAG…AYYL), 60-77 (VGLG…GVMG), and 87-109 (IPII…LYNI).

It belongs to the TMEM14 family.

It localises to the membrane. This is Transmembrane protein 14 homolog from Dictyostelium discoideum (Social amoeba).